Here is a 179-residue protein sequence, read N- to C-terminus: Large ribosomal subunit protein uL5 (179 aa).

This sequence belongs to the universal ribosomal protein uL5 family. In terms of assembly, part of the 50S ribosomal subunit; part of the 5S rRNA/L5/L18/L25 subcomplex. Contacts the 5S rRNA and the P site tRNA. Forms a bridge to the 30S subunit in the 70S ribosome.

In terms of biological role, this is one of the proteins that bind and probably mediate the attachment of the 5S RNA into the large ribosomal subunit, where it forms part of the central protuberance. In the 70S ribosome it contacts protein S13 of the 30S subunit (bridge B1b), connecting the 2 subunits; this bridge is implicated in subunit movement. Contacts the P site tRNA; the 5S rRNA and some of its associated proteins might help stabilize positioning of ribosome-bound tRNAs. This Geobacillus kaustophilus (strain HTA426) protein is Large ribosomal subunit protein uL5.